The following is a 270-amino-acid chain: Putative phosphoenolpyruvate synthase regulatory protein (270 aa).

Gly150 to Thr157 lines the ADP pocket.

The protein belongs to the pyruvate, phosphate/water dikinase regulatory protein family. PSRP subfamily.

The enzyme catalyses [pyruvate, water dikinase] + ADP = [pyruvate, water dikinase]-phosphate + AMP + H(+). It carries out the reaction [pyruvate, water dikinase]-phosphate + phosphate + H(+) = [pyruvate, water dikinase] + diphosphate. Bifunctional serine/threonine kinase and phosphorylase involved in the regulation of the phosphoenolpyruvate synthase (PEPS) by catalyzing its phosphorylation/dephosphorylation. This Shewanella frigidimarina (strain NCIMB 400) protein is Putative phosphoenolpyruvate synthase regulatory protein.